The primary structure comprises 359 residues: Alanine racemase, biosynthetic (359 aa).

Lysine 34 serves as the catalytic Proton acceptor; specific for D-alanine. Lysine 34 is subject to N6-(pyridoxal phosphate)lysine. Arginine 129 is a binding site for substrate. The Proton acceptor; specific for L-alanine role is filled by tyrosine 255. Substrate is bound at residue methionine 303.

The protein belongs to the alanine racemase family. Pyridoxal 5'-phosphate is required as a cofactor.

The enzyme catalyses L-alanine = D-alanine. It functions in the pathway amino-acid biosynthesis; D-alanine biosynthesis; D-alanine from L-alanine: step 1/1. It participates in cell wall biogenesis; peptidoglycan biosynthesis. In terms of biological role, catalyzes the interconversion of L-alanine and D-alanine. Provides the D-alanine required for cell wall biosynthesis. This chain is Alanine racemase, biosynthetic (alr), found in Salmonella typhi.